A 378-amino-acid chain; its full sequence is POU domain, class 3, transcription factor 2 (378 aa).

Disordered regions lie at residues M1–Q28, S86–R118, and L151–S205. The span at M164–H181 shows a compositional bias: basic and acidic residues. The POU-specific domain occupies E200 to D274. At S279 the chain carries Phosphoserine. A DNA-binding region (homeobox) is located at residues K292–T351. The tract at residues E347–Q378 is disordered.

The protein belongs to the POU transcription factor family. Class-3 subfamily. As to expression, predominantly expressed in the central nervous system, with strong expression in the cerebellum.

Its subcellular location is the nucleus. In terms of biological role, transcription factor that may play important roles in patterning the embryonic brain. This chain is POU domain, class 3, transcription factor 2 (pou3f2), found in Danio rerio (Zebrafish).